A 237-amino-acid chain; its full sequence is Probable 2-phosphosulfolactate phosphatase (237 aa).

The protein belongs to the ComB family. The cofactor is Mg(2+).

It catalyses the reaction (2R)-O-phospho-3-sulfolactate + H2O = (2R)-3-sulfolactate + phosphate. The protein is Probable 2-phosphosulfolactate phosphatase of Thermus thermophilus (strain ATCC 27634 / DSM 579 / HB8).